The sequence spans 246 residues: UPF0736 protein GWCH70_0753 (246 aa).

It belongs to the UPF0736 family.

This Geobacillus sp. (strain WCH70) protein is UPF0736 protein GWCH70_0753.